The sequence spans 401 residues: Probable aspartic-type endopeptidase TRV_05382 (401 aa).

Positions 1–22 (MWHSPFFTAFTLFLGFFTLTLA) are cleaved as a signal peptide. Residues N80 and N102 are each glycosylated (N-linked (GlcNAc...) asparagine). The Peptidase A1 domain maps to 94–398 (FVNEITIGNN…DHDGPKMGFA (305 aa)). Residue D110 is part of the active site. N-linked (GlcNAc...) asparagine glycosylation occurs at N282. D292 is an active-site residue. An N-linked (GlcNAc...) asparagine glycan is attached at N329.

The protein belongs to the peptidase A1 family.

Its subcellular location is the secreted. Its function is as follows. Probable aspartic-type endopeptidase which contributes to virulence. This chain is Probable aspartic-type endopeptidase TRV_05382, found in Trichophyton verrucosum (strain HKI 0517).